Consider the following 465-residue polypeptide: Branched-chain amino acid permease BcaP (465 aa).

Helical transmembrane passes span 28 to 48, 56 to 76, 88 to 110, 149 to 169, 181 to 201, 219 to 239, 259 to 279, 309 to 329, 359 to 379, 380 to 400, 416 to 436, and 438 to 458; these read FLAL…PGQV, GVVF…LAYA, AYSW…ALLA, DGGI…IIVF, ILVV…ITVI, FGGF…YIGF, GIIG…LVLV, VVTA…VLAG, VWTL…AFLA, QLIS…IYSL, PFYP…FWGL, and VQAK…YFAY.

It belongs to the amino acid-polyamine-organocation (APC) superfamily.

Its subcellular location is the cell membrane. Branched-chain amino acid transport system that specifically transports branched-chain amino acids (BCAAs) (isoleucine, leucine and valine) and, to a lesser extent, methionine. Important for CodY-mediated regulation, and required for optimal growth in media containing free amino acids as the only amino acid source. The chain is Branched-chain amino acid permease BcaP from Lactococcus lactis subsp. cremoris (strain MG1363).